Reading from the N-terminus, the 846-residue chain is Aminopeptidase N (846 aa).

Substrate-binding positions include Glu120 and Gly252–Asn256. His288 contributes to the Zn(2+) binding site. The Proton acceptor role is filled by Glu289. His292 and Glu311 together coordinate Zn(2+).

Belongs to the peptidase M1 family. In terms of assembly, monomer. It depends on Zn(2+) as a cofactor.

Its subcellular location is the cytoplasm. It carries out the reaction Release of an N-terminal amino acid, Xaa-|-Yaa- from a peptide, amide or arylamide. Xaa is preferably Ala, but may be most amino acids including Pro (slow action). When a terminal hydrophobic residue is followed by a prolyl residue, the two may be released as an intact Xaa-Pro dipeptide.. Functionally, aminopeptidase with broad substrate specificity to several peptides. It has more affinity for oligopeptides than for dipeptides. It plays an essential role in the metabolism, it may be involved in nitrogen supply or protein turnover. This Lactococcus lactis subsp. cremoris (strain MG1363) protein is Aminopeptidase N (pepN).